Reading from the N-terminus, the 421-residue chain is 4-methylaminobutanoate oxidase (methylamine-forming) (421 aa).

The FAD site is built by glutamate 31, arginine 33, arginine 39, and glutamate 379.

The protein belongs to the flavin monoamine oxidase family. As to quaternary structure, monomer. It depends on FAD as a cofactor.

It catalyses the reaction 4-(methylamino)butanoate + O2 + H2O = succinate semialdehyde + methylamine + H2O2. It participates in alkaloid degradation; nicotine degradation. Catalyzes the removal of methylamine from 4-methylaminobutanoate with the formation of succinate semialdehyde. Is involved in the catabolism of 4-methylaminobutanoate produced from nicotine. Has a very weak monoamine oxidase activity with 4-aminobutanoate. Cannot use spermidine, spermine, sarcosine, dimethylglycine, glycine, choline, betaine, alpha-methylamino isobutyrate, methylamine propionitrile and methylamino propylamine as substrate. In Paenarthrobacter nicotinovorans (Arthrobacter nicotinovorans), this protein is 4-methylaminobutanoate oxidase (methylamine-forming) (mao).